Consider the following 750-residue polypeptide: Catalase A (750 aa).

Residues 30 to 49 form a disordered region; sequence ERDTADAHTQQPLTTDHGVR. Active-site residues include His93 and Asn166. Tyr380 contributes to the heme binding site.

Belongs to the catalase family. It depends on heme as a cofactor.

The protein resides in the peroxisome matrix. It carries out the reaction 2 H2O2 = O2 + 2 H2O. Functionally, catalyzes the degradation of hydrogen peroxide (H(2)O(2)) generated by peroxisomal oxidases to water and oxygen, thereby protecting cells from the toxic effects of hydrogen peroxide. The polypeptide is Catalase A (catA) (Aspergillus fumigatus (strain ATCC MYA-4609 / CBS 101355 / FGSC A1100 / Af293) (Neosartorya fumigata)).